The following is a 418-amino-acid chain: Protease LasA (418 aa).

The N-terminal stretch at 1–31 (MQHKRSRALASPRSPFLFALLALAVGGTANA) is a signal peptide. A propeptide spanning residues 32-236 (HDDGLPAFRY…ARQLQAKAAL (205 aa)) is cleaved from the precursor. Positions 259 and 272 each coordinate Zn(2+). An intrachain disulfide couples Cys301 to Cys347. Catalysis depends on proton donor/acceptor residues His317 and His356. A Zn(2+)-binding site is contributed by His358. Residues Cys391 and Cys406 are joined by a disulfide bond.

Belongs to the peptidase M23A family. Zn(2+) serves as cofactor.

Its subcellular location is the secreted. Its function is as follows. Involved in proteolysis and elastolysis (degradation of the host protein elastin). Has staphylolytic activity (degrades pentaglycine cross-links in cell wall peptidoglycan), preferring Gly-Gly-|-X substrates where X is Ala or Gly. Enhances the elastolytic but not proteolytic activity of elastase (lasB) and elastolytic activity of other proteases. Degradation of elastin is likely to contribute to the pathogenicity of P.aeruginosa. The chain is Protease LasA (lasA) from Pseudomonas aeruginosa (strain UCBPP-PA14).